The following is a 508-amino-acid chain: ATP synthase subunit alpha (508 aa).

Residue 171 to 178 (GDRQTGKT) coordinates ATP.

Belongs to the ATPase alpha/beta chains family. F-type ATPases have 2 components, CF(1) - the catalytic core - and CF(0) - the membrane proton channel. CF(1) has five subunits: alpha(3), beta(3), gamma(1), delta(1), epsilon(1). CF(0) has three main subunits: a(1), b(2) and c(9-12). The alpha and beta chains form an alternating ring which encloses part of the gamma chain. CF(1) is attached to CF(0) by a central stalk formed by the gamma and epsilon chains, while a peripheral stalk is formed by the delta and b chains.

It is found in the cell membrane. It carries out the reaction ATP + H2O + 4 H(+)(in) = ADP + phosphate + 5 H(+)(out). Its function is as follows. Produces ATP from ADP in the presence of a proton gradient across the membrane. The alpha chain is a regulatory subunit. The chain is ATP synthase subunit alpha from Protochlamydia amoebophila (strain UWE25).